Reading from the N-terminus, the 225-residue chain is MSDGTLFTDLKERKLIRTIVPRGLVRSLKLDVKLADPSDAQQLYEREFPLRKYPTFVGPHDEWTLTEAMAIDYYLIHLSSDKEAVRQLLGPEGDFKTRADILRWESLSNSDFLNEVCEVFFPLIGVKPYNATEFKAARENVDTIVSLYEKRLKKQQYLVCDDHETLADLISAAAFSLGFISFFDETWRSKHPEVTRWFNRVIKSRFFEGEFESFKMCETEMQPIK.

The region spanning 94-225 (DFKTRADILR…MCETEMQPIK (132 aa)) is the GST C-terminal domain.

This chain is Putative elongation factor 1 gamma homolog, found in Saccharomyces cerevisiae (strain ATCC 204508 / S288c) (Baker's yeast).